A 283-amino-acid polypeptide reads, in one-letter code: Plasma membrane ascorbate-dependent reductase CYBRD1 (283 aa).

At 1–5 the chain is on the cytoplasmic side; sequence MEGYK. The helical transmembrane segment at 6–30 threads the bilayer; the sequence is SFLAFLVSSLLLGFLGVIFTLVWVL. In terms of domain architecture, Cytochrome b561 spans 13-218; the sequence is SSLLLGFLGV…FGGLVVWMVT (206 aa). Residues 31–45 are Extracellular-facing; it reads HWREGLGWDGGAAEF. The helical transmembrane segment at 46 to 67 threads the bilayer; the sequence is NWHPVLVTSGFIFIQGIAIIVY. Heme b contacts are provided by histidine 48, arginine 68, and lysine 77. The Cytoplasmic portion of the chain corresponds to 68–76; it reads RLPWTWKCS. L-ascorbate-binding residues include lysine 77 and lysine 81. A helical membrane pass occupies residues 77-103; sequence KLLMKFIHAGLHLTALIFTIVALVAVF. Position 84 (histidine 84) interacts with heme b. Topologically, residues 104–116 are extracellular; sequence DFHNAKNIPNMYS. Histidine 106 serves as a coordination point for Fe(3+). Residues 113–116 and histidine 118 each bind heme b; that span reads NMYS. A helical membrane pass occupies residues 117–142; sequence LHSWIGLTVVILYALQLVLGVSIYLL. The Cytoplasmic segment spans residues 143–149; the sequence is PFASNTL. Arginine 150 is a binding site for L-ascorbate. Residues 150 to 177 form a helical membrane-spanning segment; the sequence is RAALMPVHVYSGLFIFGTVIATALMGIT. Heme b contacts are provided by histidine 157 and glutamate 178. Topologically, residues 178-195 are extracellular; the sequence is EKLIFSLKEPPYSKLPPE. Residues 196–220 traverse the membrane as a helical segment; that stretch reads AIFVNTFGLLILVFGGLVVWMVTTP. Residues 221–283 lie on the Cytoplasmic side of the membrane; sequence AWKRPREQGM…LDEAGQRSTM (63 aa). A heme b-binding site is contributed by lysine 223. The disordered stretch occupies residues 234–262; that stretch reads SPTVSSPDETEEGSTITDCSNTEKSDVEL. Residues 235–253 show a composition bias toward polar residues; sequence PTVSSPDETEEGSTITDCS.

As to quaternary structure, homodimer. It depends on heme b as a cofactor.

The protein resides in the cell membrane. Its subcellular location is the apical cell membrane. It carries out the reaction Fe(3+)(out) + L-ascorbate(in) = monodehydro-L-ascorbate radical(in) + Fe(2+)(out) + H(+). The catalysed reaction is Cu(2+)(out) + L-ascorbate(in) = Cu(+)(out) + monodehydro-L-ascorbate radical(in) + H(+). The enzyme catalyses monodehydro-L-ascorbate radical(out) + L-ascorbate(in) = monodehydro-L-ascorbate radical(in) + L-ascorbate(out). Functionally, plasma membrane reductase that uses cytoplasmic ascorbate as an electron donor to reduce extracellular Fe(3+) into Fe(2+). It is also able to reduce extracellular monodehydro-L-ascorbate and may be involved in extracellular ascorbate regeneration. May also function as a cupric transmembrane reductase. The chain is Plasma membrane ascorbate-dependent reductase CYBRD1 (cybrd1) from Xenopus laevis (African clawed frog).